The chain runs to 1028 residues: Contactin-3 (1028 aa).

The signal sequence occupies residues 1–19 (MMLSWKQLILLSFIGCLAG). Ig-like C2-type domains follow at residues 32 to 117 (PSNS…AKLQ), 122 to 209 (ENFK…RVLG), 227 to 313 (PKIE…GRLT), 318 to 402 (PYWL…AELK), 408 to 497 (PDFS…LVVT), and 499 to 593 (PTRI…AELI). 5 cysteine pairs are disulfide-bonded: Cys-50-Cys-100, Cys-144-Cys-196, Cys-249-Cys-297, Cys-339-Cys-386, and Cys-431-Cys-479. N-linked (GlcNAc...) asparagine glycans are attached at residues Asn-65 and Asn-193. 3 N-linked (GlcNAc...) asparagine glycosylation sites follow: Asn-377, Asn-468, and Asn-489. Cysteines 521 and 577 form a disulfide. Fibronectin type-III domains follow at residues 600-698 (PPEN…TEEA), 703-800 (APSE…SAEE), 805-901 (APSH…TKKT), and 902-998 (PPSQ…TSMD). Residues 684–714 (GEPSLPSEKVRTEEAAPEIAPSEVSGGGGSR) form a disordered region. N-linked (GlcNAc...) asparagine glycans are attached at residues Asn-765, Asn-860, Asn-895, Asn-913, Asn-931, and Asn-956. The GPI-anchor amidated serine moiety is linked to residue Ser-1002. Positions 1003–1028 (TSAISNIHPLSGYMSVLLFFIVNALW) are cleaved as a propeptide — removed in mature form.

The protein belongs to the immunoglobulin superfamily. Contactin family. Interacts with PTPRG. Specifically expressed in brain. Ectopically expressed in tumors expressing endogenous intracisternal A-type particles (IAPs).

It is found in the cell membrane. Its function is as follows. Contactins mediate cell surface interactions during nervous system development. Has some neurite outgrowth-promoting activity. The chain is Contactin-3 (Cntn3) from Mus musculus (Mouse).